We begin with the raw amino-acid sequence, 137 residues long: Leaf-specific thionin (137 aa).

The N-terminal stretch at 1–28 (MATNKSIKSVVICVLILGLVLEQVQVEA) is a signal peptide. 4 disulfide bridges follow: C31–C68, C32–C60, C40–C58, and C44–C54. The propeptide at 75 to 137 (LNLLPESGEP…DGEVIQSVEA (63 aa)) is acidic domain.

Belongs to the plant thionin (TC 1.C.44) family. 4 C-C subfamily.

It localises to the secreted. In terms of biological role, thionins are small plant proteins which are toxic to animal cells. They seem to exert their toxic effect at the level of the cell membrane. Their precise function is not known. In Hordeum vulgare (Barley), this protein is Leaf-specific thionin (THI1.5).